Reading from the N-terminus, the 316-residue chain is Ornithine carbamoyltransferase (316 aa).

Carbamoyl phosphate is bound by residues 59 to 62 (STRT), Gln86, Arg110, and 137 to 140 (HPCQ). Residues Asn168, Asp232, and 236–237 (SM) each bind L-ornithine. Residues 273 to 274 (CL) and Arg301 each bind carbamoyl phosphate.

Belongs to the aspartate/ornithine carbamoyltransferase superfamily. OTCase family.

It is found in the cytoplasm. The catalysed reaction is carbamoyl phosphate + L-ornithine = L-citrulline + phosphate + H(+). It functions in the pathway amino-acid biosynthesis; L-arginine biosynthesis; L-arginine from L-ornithine and carbamoyl phosphate: step 1/3. Reversibly catalyzes the transfer of the carbamoyl group from carbamoyl phosphate (CP) to the N(epsilon) atom of ornithine (ORN) to produce L-citrulline. The polypeptide is Ornithine carbamoyltransferase (Listeria innocua serovar 6a (strain ATCC BAA-680 / CLIP 11262)).